The primary structure comprises 24 residues: Humanin-like 1 (24 aa).

Belongs to the humanin family. Highly expressed in the kidney, heart muscle and testis.

It is found in the secreted. Its subcellular location is the cytoplasm. Its function is as follows. Plays a role as a neuroprotective and antiapoptotic factor. This Homo sapiens (Human) protein is Humanin-like 1.